The following is a 309-amino-acid chain: Homoserine O-succinyltransferase (309 aa).

Catalysis depends on cysteine 142, which acts as the Acyl-thioester intermediate. Positions 163 and 192 each coordinate substrate. The active-site Proton acceptor is the histidine 235. Glutamate 237 is an active-site residue. Arginine 249 lines the substrate pocket.

The protein belongs to the MetA family. As to quaternary structure, homodimer.

The protein resides in the cytoplasm. The enzyme catalyses L-homoserine + succinyl-CoA = O-succinyl-L-homoserine + CoA. The protein operates within amino-acid biosynthesis; L-methionine biosynthesis via de novo pathway; O-succinyl-L-homoserine from L-homoserine: step 1/1. Functionally, transfers a succinyl group from succinyl-CoA to L-homoserine, forming succinyl-L-homoserine. This is Homoserine O-succinyltransferase from Escherichia coli (strain SE11).